Here is a 206-residue protein sequence, read N- to C-terminus: A-type ATP synthase subunit D (206 aa).

Belongs to the V-ATPase D subunit family. As to quaternary structure, has multiple subunits with at least A(3), B(3), C, D, E, F, H, I and proteolipid K(x).

Its subcellular location is the cell membrane. In terms of biological role, component of the A-type ATP synthase that produces ATP from ADP in the presence of a proton gradient across the membrane. In Methanococcoides burtonii (strain DSM 6242 / NBRC 107633 / OCM 468 / ACE-M), this protein is A-type ATP synthase subunit D.